Reading from the N-terminus, the 898-residue chain is Putative disease resistance protein At1g63350 (898 aa).

Residues 24 to 88 (VSYTHNLEKN…IESRVNDLLN (65 aa)) are a coiled coil. An NB-ARC domain is found at 137–440 (DQASTSEVEE…CEEIIDGSEG (304 aa)). Residue 179–186 (GMGGVGKT) participates in ATP binding. LRR repeat units follow at residues 516-537 (VVRRMSLMKNNIAHLDGRLDCM), 538-559 (ELTTLLLQSTHLEKISSEFFNS), 562-584 (KLAVLDLSGNYYLSELPNGISEL), 586-608 (SLQYLNLSSTGIRHLPKGLQELK), 609-631 (KLIHLYLERTSQLGSMVGISCLH), and 632-654 (NLKVLKLSGSSYAWDLDTVKELE).

This sequence belongs to the disease resistance NB-LRR family.

Potential disease resistance protein. This is Putative disease resistance protein At1g63350 from Arabidopsis thaliana (Mouse-ear cress).